The sequence spans 497 residues: MSTTTETVTWSQYKPQETQRRLSRSSTITPSVSEYRSGFSKTAFGNIELEEIPDKQGNITRATSNLESNSYPKALDPDACPPKRSIALVLLNNLMSEMSLTIALPISAAYTEILGGTDAFSGLVIGIPTMISLVCLYPMLRFANPKSANGYTLYFRPLIVSCISQIIGHLLYSLAYRAQWLYLILIGRMCSGVGFTMFLYHKTYLTDKNFVGQNRSTFLATLNILAQILGSMAGAFLGGILAKASMHLTDPIWNQYTAGSWFMLFIWIVYSIFLSIFFKEVRVGNTATNVRKPESFTGKTAPLSFKQKFMLCFLSMAAFISIFNVAGYQTSVPIYAKALYHYNPFQSGNFLSLSSLVIAPFVFFSTFLSKWLEDRQIMLYGFMMGIVALIVHLVLDAVHKIPVQPYFVLYSIMQFGFSVGSAPLVSLATKQLHPKYHMITGVVVQVGISIGETVGSICGGAIFDITTVGFIAMNLGIALLVFIQLLYLWTFIKTKTG.

The span at 1–16 shows a compositional bias: polar residues; the sequence is MSTTTETVTWSQYKPQ. A disordered region spans residues 1-29; it reads MSTTTETVTWSQYKPQETQRRLSRSSTIT. Ser64 is subject to Phosphoserine. Transmembrane regions (helical) follow at residues 86-106, 120-140, 155-175, 180-200, 222-242, and 258-278; these read IALVLLNNLMSEMSLTIALPI, FSGLVIGIPTMISLVCLYPML, FRPLIVSCISQIIGHLLYSLA, WLYLILIGRMCSGVGFTMFLY, LNILAQILGSMAGAFLGGILA, and AGSWFMLFIWIVYSIFLSIFF. At Ser295 the chain carries Phosphoserine. Transmembrane regions (helical) follow at residues 309 to 329, 348 to 368, 377 to 397, 407 to 427, 443 to 463, and 468 to 488; these read FMLCFLSMAAFISIFNVAGYQ, GNFLSLSSLVIAPFVFFSTFL, IMLYGFMMGIVALIVHLVLDA, FVLYSIMQFGFSVGSAPLVSL, VVQVGISIGETVGSICGGAIF, and VGFIAMNLGIALLVFIQLLYL.

It localises to the membrane. This is an uncharacterized protein from Schizosaccharomyces pombe (strain 972 / ATCC 24843) (Fission yeast).